Consider the following 166-residue polypeptide: 2-amino-4-hydroxy-6-hydroxymethyldihydropteridine pyrophosphokinase (166 aa).

This sequence belongs to the HPPK family.

The enzyme catalyses 6-hydroxymethyl-7,8-dihydropterin + ATP = (7,8-dihydropterin-6-yl)methyl diphosphate + AMP + H(+). Its pathway is cofactor biosynthesis; tetrahydrofolate biosynthesis; 2-amino-4-hydroxy-6-hydroxymethyl-7,8-dihydropteridine diphosphate from 7,8-dihydroneopterin triphosphate: step 4/4. In terms of biological role, catalyzes the transfer of pyrophosphate from adenosine triphosphate (ATP) to 6-hydroxymethyl-7,8-dihydropterin, an enzymatic step in folate biosynthesis pathway. The sequence is that of 2-amino-4-hydroxy-6-hydroxymethyldihydropteridine pyrophosphokinase (folK) from Streptococcus pyogenes serotype M18 (strain MGAS8232).